The sequence spans 393 residues: NAD(P)H-quinone oxidoreductase subunit H, chloroplastic (393 aa).

The protein belongs to the complex I 49 kDa subunit family. NDH is composed of at least 16 different subunits, 5 of which are encoded in the nucleus.

It localises to the plastid. It is found in the chloroplast thylakoid membrane. The catalysed reaction is a plastoquinone + NADH + (n+1) H(+)(in) = a plastoquinol + NAD(+) + n H(+)(out). It catalyses the reaction a plastoquinone + NADPH + (n+1) H(+)(in) = a plastoquinol + NADP(+) + n H(+)(out). Functionally, NDH shuttles electrons from NAD(P)H:plastoquinone, via FMN and iron-sulfur (Fe-S) centers, to quinones in the photosynthetic chain and possibly in a chloroplast respiratory chain. The immediate electron acceptor for the enzyme in this species is believed to be plastoquinone. Couples the redox reaction to proton translocation, and thus conserves the redox energy in a proton gradient. The protein is NAD(P)H-quinone oxidoreductase subunit H, chloroplastic of Phaseolus vulgaris (Kidney bean).